The sequence spans 131 residues: Hydrogenase maturation factor HypA (131 aa).

Residue H2 coordinates Ni(2+). Residues C73, C76, C105, and C108 each coordinate Zn(2+).

It belongs to the HypA/HybF family.

In terms of biological role, involved in the maturation of [NiFe] hydrogenases. Required for nickel insertion into the metal center of the hydrogenase. This Thermomicrobium roseum (strain ATCC 27502 / DSM 5159 / P-2) protein is Hydrogenase maturation factor HypA.